Consider the following 576-residue polypeptide: Arginine--tRNA ligase (576 aa).

Residues 122-132 carry the 'HIGH' region motif; that stretch reads PNVAKQMHVGH.

Belongs to the class-I aminoacyl-tRNA synthetase family. In terms of assembly, monomer.

It is found in the cytoplasm. It catalyses the reaction tRNA(Arg) + L-arginine + ATP = L-arginyl-tRNA(Arg) + AMP + diphosphate. This chain is Arginine--tRNA ligase, found in Yersinia pseudotuberculosis serotype O:3 (strain YPIII).